The chain runs to 582 residues: ATP-dependent lipid A-core flippase (582 aa).

5 helical membrane-spanning segments follow: residues 15–35 (LWPI…ALVI), 68–88 (YVVV…SYCL), 140–160 (GALI…AVML), 161–181 (YTSW…AVLI), and 254–274 (VQII…VPTI). An ABC transmembrane type-1 domain is found at 27–310 (VVSGIALVIN…LTNVNAQFQK (284 aa)). The 237-residue stretch at 342–578 (LSFKNVTFTY…NGAYKQLHHI (237 aa)) folds into the ABC transporter domain. Residue 376 to 383 (GRSGSGKS) coordinates ATP.

The protein belongs to the ABC transporter superfamily. Lipid exporter (TC 3.A.1.106) family. Homodimer.

It is found in the cell inner membrane. The enzyme catalyses ATP + H2O + lipid A-core oligosaccharideSide 1 = ADP + phosphate + lipid A-core oligosaccharideSide 2.. Its function is as follows. Involved in lipopolysaccharide (LPS) biosynthesis. Translocates lipid A-core from the inner to the outer leaflet of the inner membrane. Transmembrane domains (TMD) form a pore in the inner membrane and the ATP-binding domain (NBD) is responsible for energy generation. This is ATP-dependent lipid A-core flippase from Pasteurella multocida (strain Pm70).